The following is a 474-amino-acid chain: Capsid vertex component 1 (474 aa).

Belongs to the herpesviridae CVC1 protein family. In terms of assembly, interacts (via C-terminus) with capsid vertex component 2/CVC2.

The protein localises to the virion. The protein resides in the host nucleus. Functionally, capsid vertex-specific component that plays a role during viral DNA encapsidation, assuring correct genome cleavage and presumably stabilizing capsids that contain full-length viral genomes. The polypeptide is Capsid vertex component 1 (Alcelaphine herpesvirus 1 (strain C500) (AlHV-1)).